The sequence spans 282 residues: DNA-3-methyladenine glycosylase 2 (282 aa).

Catalysis depends on aspartate 238, which acts as the Proton acceptor.

It belongs to the alkylbase DNA glycosidase AlkA family. Monomer.

It carries out the reaction Hydrolysis of alkylated DNA, releasing 3-methyladenine, 3-methylguanine, 7-methylguanine and 7-methyladenine.. Functionally, hydrolysis of the deoxyribose N-glycosidic bond to excise 3-methyladenine, 3-methylguanine, 7-methylguanine, O2-methylthymine, and O2-methylcytosine from the damaged DNA polymer formed by alkylation lesions. This Escherichia coli (strain K12) protein is DNA-3-methyladenine glycosylase 2 (alkA).